Consider the following 642-residue polypeptide: 1-deoxy-D-xylulose-5-phosphate synthase 2 (642 aa).

Residues H73 and S113–A115 each bind thiamine diphosphate. Position 144 (D144) interacts with Mg(2+). Thiamine diphosphate is bound by residues G145–A146, N174, Y285, and E366. Position 174 (N174) interacts with Mg(2+).

Belongs to the transketolase family. DXPS subfamily. As to quaternary structure, homodimer. Requires Mg(2+) as cofactor. Thiamine diphosphate is required as a cofactor.

The enzyme catalyses D-glyceraldehyde 3-phosphate + pyruvate + H(+) = 1-deoxy-D-xylulose 5-phosphate + CO2. Its pathway is metabolic intermediate biosynthesis; 1-deoxy-D-xylulose 5-phosphate biosynthesis; 1-deoxy-D-xylulose 5-phosphate from D-glyceraldehyde 3-phosphate and pyruvate: step 1/1. Its function is as follows. Catalyzes the acyloin condensation reaction between C atoms 2 and 3 of pyruvate and glyceraldehyde 3-phosphate to yield 1-deoxy-D-xylulose-5-phosphate (DXP). The protein is 1-deoxy-D-xylulose-5-phosphate synthase 2 of Streptomyces avermitilis (strain ATCC 31267 / DSM 46492 / JCM 5070 / NBRC 14893 / NCIMB 12804 / NRRL 8165 / MA-4680).